Reading from the N-terminus, the 388-residue chain is Chorismate synthase (388 aa).

The NADP(+) site is built by arginine 39 and arginine 45. FMN contacts are provided by residues 130 to 132 (RSS), 251 to 252 (NA), glycine 296, 311 to 315 (KPIPT), and arginine 337.

The protein belongs to the chorismate synthase family. Homotetramer. It depends on FMNH2 as a cofactor.

It carries out the reaction 5-O-(1-carboxyvinyl)-3-phosphoshikimate = chorismate + phosphate. The protein operates within metabolic intermediate biosynthesis; chorismate biosynthesis; chorismate from D-erythrose 4-phosphate and phosphoenolpyruvate: step 7/7. Functionally, catalyzes the anti-1,4-elimination of the C-3 phosphate and the C-6 proR hydrogen from 5-enolpyruvylshikimate-3-phosphate (EPSP) to yield chorismate, which is the branch point compound that serves as the starting substrate for the three terminal pathways of aromatic amino acid biosynthesis. This reaction introduces a second double bond into the aromatic ring system. The chain is Chorismate synthase from Streptococcus pyogenes serotype M2 (strain MGAS10270).